The sequence spans 443 residues: UDP-N-acetylmuramate--L-alanine ligase (443 aa).

110–116 (GAHGKTS) lines the ATP pocket.

It belongs to the MurCDEF family.

The protein localises to the cytoplasm. The enzyme catalyses UDP-N-acetyl-alpha-D-muramate + L-alanine + ATP = UDP-N-acetyl-alpha-D-muramoyl-L-alanine + ADP + phosphate + H(+). The protein operates within cell wall biogenesis; peptidoglycan biosynthesis. Functionally, cell wall formation. The chain is UDP-N-acetylmuramate--L-alanine ligase from Lactococcus lactis subsp. lactis (strain IL1403) (Streptococcus lactis).